Reading from the N-terminus, the 67-residue chain is Large ribosomal subunit protein bL35 (67 aa).

This sequence belongs to the bacterial ribosomal protein bL35 family.

The protein is Large ribosomal subunit protein bL35 of Methylorubrum populi (strain ATCC BAA-705 / NCIMB 13946 / BJ001) (Methylobacterium populi).